We begin with the raw amino-acid sequence, 358 residues long: DnaJ homolog subfamily B member 11 (358 aa).

Positions 1–22 are cleaved as a signal peptide; the sequence is MAPQNLSTFCLLLLYLIGTVIA. One can recognise a J domain in the interval 25–90; that stretch reads DFYKILGVPR…EKRKQYDTYG (66 aa). T188 carries the post-translational modification Phosphothreonine. A glycan (N-linked (GlcNAc...) asparagine) is linked at N261.

In terms of assembly, part of a large chaperone multiprotein complex comprising DNAJB11, HSP90B1, HSPA5, HYOU, PDIA2, PDIA4, PDIA6, PPIB, SDF2L1, UGGT1 and very small amounts of ERP29, but not, or at very low levels, CALR nor CANX. Binds to denatured substrates in an ATP-independent manner. Interacts via the J domain with HSPA5 in an ATP-dependent manner. Contains high-mannose Endo H-sensitive carbohydrates. In terms of processing, cys-169, Cys-171, Cys-193 and Cys-196 form intramolecular disulfide bonds. The preferential partner for each Cys is not known.

It localises to the endoplasmic reticulum lumen. Its function is as follows. As a co-chaperone for HSPA5 it is required for proper folding, trafficking or degradation of proteins. Binds directly to both unfolded proteins that are substrates for ERAD and nascent unfolded peptide chains, but dissociates from the HSPA5-unfolded protein complex before folding is completed. May help recruiting HSPA5 and other chaperones to the substrate. Stimulates HSPA5 ATPase activity. It is necessary for maturation and correct trafficking of PKD1. This is DnaJ homolog subfamily B member 11 (Dnajb11) from Mus musculus (Mouse).